Reading from the N-terminus, the 237-residue chain is uncharacterized protein (237 aa).

This is an uncharacterized protein from Schizosaccharomyces pombe (strain 972 / ATCC 24843) (Fission yeast).